The following is a 348-amino-acid chain: Dihydroorotase (348 aa).

Positions 17 and 19 each coordinate Zn(2+). Substrate contacts are provided by residues histidine 19–arginine 21 and asparagine 45. Zn(2+) is bound by residues lysine 103, histidine 140, and histidine 178. Lysine 103 carries the N6-carboxylysine modification. Histidine 140 lines the substrate pocket. Leucine 223 is a binding site for substrate. Aspartate 251 provides a ligand contact to Zn(2+). The active site involves aspartate 251. Histidine 255 and alanine 267 together coordinate substrate.

Belongs to the metallo-dependent hydrolases superfamily. DHOase family. Class II DHOase subfamily. As to quaternary structure, homodimer. Requires Zn(2+) as cofactor.

It catalyses the reaction (S)-dihydroorotate + H2O = N-carbamoyl-L-aspartate + H(+). The protein operates within pyrimidine metabolism; UMP biosynthesis via de novo pathway; (S)-dihydroorotate from bicarbonate: step 3/3. Catalyzes the reversible cyclization of carbamoyl aspartate to dihydroorotate. The chain is Dihydroorotase from Salmonella typhimurium (strain LT2 / SGSC1412 / ATCC 700720).